The following is a 475-amino-acid chain: Ribulose bisphosphate carboxylase large chain (475 aa).

A propeptide spanning residues 1 to 2 (MS) is cleaved from the precursor. Pro-3 bears the N-acetylproline mark. Residue Lys-14 is modified to N6,N6,N6-trimethyllysine. Positions 123 and 173 each coordinate substrate. The active-site Proton acceptor is the Lys-175. Position 177 (Lys-177) interacts with substrate. Residues Lys-201, Asp-203, and Glu-204 each contribute to the Mg(2+) site. At Lys-201 the chain carries N6-carboxylysine. His-294 (proton acceptor) is an active-site residue. Positions 295, 327, and 379 each coordinate substrate.

It belongs to the RuBisCO large chain family. Type I subfamily. In terms of assembly, heterohexadecamer of 8 large chains and 8 small chains; disulfide-linked. The disulfide link is formed within the large subunit homodimers. Mg(2+) serves as cofactor. The disulfide bond which can form in the large chain dimeric partners within the hexadecamer appears to be associated with oxidative stress and protein turnover.

It localises to the plastid. The protein localises to the chloroplast. It catalyses the reaction 2 (2R)-3-phosphoglycerate + 2 H(+) = D-ribulose 1,5-bisphosphate + CO2 + H2O. The enzyme catalyses D-ribulose 1,5-bisphosphate + O2 = 2-phosphoglycolate + (2R)-3-phosphoglycerate + 2 H(+). Its function is as follows. RuBisCO catalyzes two reactions: the carboxylation of D-ribulose 1,5-bisphosphate, the primary event in carbon dioxide fixation, as well as the oxidative fragmentation of the pentose substrate in the photorespiration process. Both reactions occur simultaneously and in competition at the same active site. The protein is Ribulose bisphosphate carboxylase large chain of Angiopteris lygodiifolia (Turnip fern).